A 152-amino-acid polypeptide reads, in one-letter code: Ribosomal RNA large subunit methyltransferase H (152 aa).

S-adenosyl-L-methionine-binding positions include leucine 69, glycine 96, and 118–123 (FGKLTF).

This sequence belongs to the RNA methyltransferase RlmH family. In terms of assembly, homodimer.

The protein resides in the cytoplasm. It catalyses the reaction pseudouridine(1915) in 23S rRNA + S-adenosyl-L-methionine = N(3)-methylpseudouridine(1915) in 23S rRNA + S-adenosyl-L-homocysteine + H(+). Specifically methylates the pseudouridine at position 1915 (m3Psi1915) in 23S rRNA. This Mesomycoplasma hyopneumoniae (strain 232) (Mycoplasma hyopneumoniae) protein is Ribosomal RNA large subunit methyltransferase H.